The chain runs to 429 residues: Enolase (429 aa).

A (2R)-2-phosphoglycerate-binding site is contributed by Gln-163. Catalysis depends on Glu-205, which acts as the Proton donor. Asp-242, Glu-285, and Asp-312 together coordinate Mg(2+). 4 residues coordinate (2R)-2-phosphoglycerate: Lys-337, Arg-366, Ser-367, and Lys-388. Catalysis depends on Lys-337, which acts as the Proton acceptor.

Belongs to the enolase family. It depends on Mg(2+) as a cofactor.

The protein resides in the cytoplasm. The protein localises to the secreted. It is found in the cell surface. The enzyme catalyses (2R)-2-phosphoglycerate = phosphoenolpyruvate + H2O. The protein operates within carbohydrate degradation; glycolysis; pyruvate from D-glyceraldehyde 3-phosphate: step 4/5. Its function is as follows. Catalyzes the reversible conversion of 2-phosphoglycerate (2-PG) into phosphoenolpyruvate (PEP). It is essential for the degradation of carbohydrates via glycolysis. In Aromatoleum aromaticum (strain DSM 19018 / LMG 30748 / EbN1) (Azoarcus sp. (strain EbN1)), this protein is Enolase.